A 202-amino-acid polypeptide reads, in one-letter code: Recombination protein RecR (202 aa).

The segment at 56–71 (CVVCGTVSDGELCRIC) adopts a C4-type zinc-finger fold. Residues 79-179 (TMICVVEEPK…TVTRLASGLP (101 aa)) form the Toprim domain.

This sequence belongs to the RecR family.

May play a role in DNA repair. It seems to be involved in an RecBC-independent recombinational process of DNA repair. It may act with RecF and RecO. This Nocardia farcinica (strain IFM 10152) protein is Recombination protein RecR.